Consider the following 291-residue polypeptide: Elongation factor Ts (291 aa).

The segment at 84–87 (TDFV) is involved in Mg(2+) ion dislocation from EF-Tu.

The protein belongs to the EF-Ts family.

It localises to the cytoplasm. In terms of biological role, associates with the EF-Tu.GDP complex and induces the exchange of GDP to GTP. It remains bound to the aminoacyl-tRNA.EF-Tu.GTP complex up to the GTP hydrolysis stage on the ribosome. The polypeptide is Elongation factor Ts (Bifidobacterium adolescentis (strain ATCC 15703 / DSM 20083 / NCTC 11814 / E194a)).